The chain runs to 254 residues: UPF0246 protein BDI_1226 (254 aa).

The protein belongs to the UPF0246 family.

The sequence is that of UPF0246 protein BDI_1226 from Parabacteroides distasonis (strain ATCC 8503 / DSM 20701 / CIP 104284 / JCM 5825 / NCTC 11152).